The chain runs to 159 residues: Large ribosomal subunit protein uL11 (159 aa).

Belongs to the universal ribosomal protein uL11 family. Part of the ribosomal stalk of the 50S ribosomal subunit. Interacts with L10 and the large rRNA to form the base of the stalk. L10 forms an elongated spine to which L12 dimers bind in a sequential fashion forming a multimeric L10(L12)X complex.

In terms of biological role, forms part of the ribosomal stalk which helps the ribosome interact with GTP-bound translation factors. The chain is Large ribosomal subunit protein uL11 from Methanococcus maripaludis (strain DSM 14266 / JCM 13030 / NBRC 101832 / S2 / LL).